The primary structure comprises 149 residues: 3-hydroxyacyl-[acyl-carrier-protein] dehydratase FabZ (149 aa).

His-49 is a catalytic residue.

Belongs to the thioester dehydratase family. FabZ subfamily.

It localises to the cytoplasm. The catalysed reaction is a (3R)-hydroxyacyl-[ACP] = a (2E)-enoyl-[ACP] + H2O. Its function is as follows. Involved in unsaturated fatty acids biosynthesis. Catalyzes the dehydration of short chain beta-hydroxyacyl-ACPs and long chain saturated and unsaturated beta-hydroxyacyl-ACPs. This chain is 3-hydroxyacyl-[acyl-carrier-protein] dehydratase FabZ, found in Sulfurimonas denitrificans (strain ATCC 33889 / DSM 1251) (Thiomicrospira denitrificans (strain ATCC 33889 / DSM 1251)).